Here is a 379-residue protein sequence, read N- to C-terminus: Retinoic acid receptor RXR-alpha-B (379 aa).

The segment covering 1–22 (MPVPEQKQTVQLSSPMNAVSSS) has biased composition (polar residues). Residues 1–24 (MPVPEQKQTVQLSSPMNAVSSSED) form a disordered region. Positions 1 to 53 (MPVPEQKQTVQLSSPMNAVSSSEDIKPPLGLNGVMKVPAHRIGTLSLSLTKHI) are modulating. The segment at residues 51-126 (KHICAICGDR…MGMKREAVQE (76 aa)) is a DNA-binding region (nuclear receptor). Positions 54, 57, 71, and 74 each coordinate Zn(2+). An NR C4-type zinc finger spans residues 54–74 (CAICGDRSSGKHYGVYSCEGC). The tract at residues 79-84 (KRTVRK) is nuclear localization signal. Cys90, Cys96, Cys106, and Cys109 together coordinate Zn(2+). The segment at 90-109 (CRDNKDCMIDKRQRNRCQYC) adopts an NR C4-type zinc-finger fold. Positions 120–141 (KREAVQEERQRAKERSEAEFGG) are hinge. Positions 144 to 375 (NEDMPVEKIL…TFLMEMLEAP (232 aa)) constitute an NR LBD domain. Residues Arg233 and Ala244 each contribute to the 9-cis-retinoate site. Arg233 and Ala244 together coordinate all-trans-retinoate. Residues 265-285 (RVLTELVSKMRDMQMDKTELG) are required for nuclear export. Positions 364–375 (IDTFLMEMLEAP) are AF-2.

The protein belongs to the nuclear hormone receptor family. NR2 subfamily. Homodimer. Heterodimer; with a rar molecule. Binds DNA preferentially as a rar/rxr heterodimer. In terms of tissue distribution, uniform expression from the blastula to mid-gastrula stages. At 12 hours post-fertilization (hpf), expressed strongly in the tail and weakly elsewhere. At 24 hpf, weak expression in the forebrain, eyes and pharyngeal endoderm and continued expression in the tail mesoderm. At 48 hpf, anterior expression limited to ventral cells underlying the head, medial expression in the pectoral fin bud mesoderm and continued tail expression.

Its subcellular location is the nucleus. Receptor for retinoic acid that acts as a transcription factor. Forms homo- or heterodimers with retinoic acid receptors (rars) and binds to target response elements in response to their ligands, all-trans or 9-cis retinoic acid, to regulate gene expression in various biological processes. The rar/rxr heterodimers bind to the retinoic acid response elements (RARE) composed of tandem 5'-AGGTCA-3' sites known as DR1-DR5 to regulate transcription. The high affinity ligand for rxrs is 9-cis retinoic acid. In the absence of ligand, the rar/rxr heterodimers associate with a multiprotein complex containing transcription corepressors that induce histone deacetylation, chromatin condensation and transcriptional suppression. On ligand binding, the corepressors dissociate from the receptors and coactivators are recruited leading to transcriptional activation. In Danio rerio (Zebrafish), this protein is Retinoic acid receptor RXR-alpha-B (rxrab).